A 115-amino-acid polypeptide reads, in one-letter code: Large ribosomal subunit protein bL19 (115 aa).

This sequence belongs to the bacterial ribosomal protein bL19 family.

Its function is as follows. This protein is located at the 30S-50S ribosomal subunit interface and may play a role in the structure and function of the aminoacyl-tRNA binding site. In Nitratidesulfovibrio vulgaris (strain DSM 19637 / Miyazaki F) (Desulfovibrio vulgaris), this protein is Large ribosomal subunit protein bL19.